Consider the following 309-residue polypeptide: Malate dehydrogenase (309 aa).

NAD(+)-binding positions include 9–14 (GAGFVG) and D33. 2 residues coordinate substrate: R82 and R88. NAD(+) is bound by residues N95 and 118–120 (VNN). Residues N120 and R151 each coordinate substrate. The active-site Proton acceptor is the H175.

It belongs to the LDH/MDH superfamily. MDH type 3 family.

It carries out the reaction (S)-malate + NAD(+) = oxaloacetate + NADH + H(+). In terms of biological role, catalyzes the reversible oxidation of malate to oxaloacetate. The sequence is that of Malate dehydrogenase from Chloroflexus aggregans (strain MD-66 / DSM 9485).